Consider the following 389-residue polypeptide: Chalcone synthase 2 (389 aa).

The active site involves Cys164.

It belongs to the thiolase-like superfamily. Chalcone/stilbene synthases family.

It catalyses the reaction (E)-4-coumaroyl-CoA + 3 malonyl-CoA + 3 H(+) = 2',4,4',6'-tetrahydroxychalcone + 3 CO2 + 4 CoA. It functions in the pathway secondary metabolite biosynthesis; flavonoid biosynthesis. In terms of biological role, the primary product of this enzyme is 4,2',4',6'-tetrahydroxychalcone (also termed naringenin-chalcone or chalcone) which can under specific conditions spontaneously isomerize into naringenin. This Trifolium subterraneum (Subterranean clover) protein is Chalcone synthase 2 (CHS2).